A 90-amino-acid chain; its full sequence is Cell division topological specificity factor (90 aa).

The protein belongs to the MinE family.

Prevents the cell division inhibition by proteins MinC and MinD at internal division sites while permitting inhibition at polar sites. This ensures cell division at the proper site by restricting the formation of a division septum at the midpoint of the long axis of the cell. The sequence is that of Cell division topological specificity factor from Francisella philomiragia subsp. philomiragia (strain ATCC 25017 / CCUG 19701 / FSC 153 / O#319-036).